We begin with the raw amino-acid sequence, 206 residues long: dITP/XTP pyrophosphatase (206 aa).

Residue 7 to 12 (SSHGYK) participates in substrate binding. Catalysis depends on Asp70, which acts as the Proton acceptor. Asp70 contacts Mg(2+). Residues Thr71, 154 to 157 (FGYD), Lys177, and 182 to 183 (HR) contribute to the substrate site.

The protein belongs to the HAM1 NTPase family. As to quaternary structure, homodimer. Mg(2+) is required as a cofactor.

It carries out the reaction XTP + H2O = XMP + diphosphate + H(+). The enzyme catalyses dITP + H2O = dIMP + diphosphate + H(+). It catalyses the reaction ITP + H2O = IMP + diphosphate + H(+). Its function is as follows. Pyrophosphatase that catalyzes the hydrolysis of nucleoside triphosphates to their monophosphate derivatives, with a high preference for the non-canonical purine nucleotides XTP (xanthosine triphosphate), dITP (deoxyinosine triphosphate) and ITP. Seems to function as a house-cleaning enzyme that removes non-canonical purine nucleotides from the nucleotide pool, thus preventing their incorporation into DNA/RNA and avoiding chromosomal lesions. The polypeptide is dITP/XTP pyrophosphatase (Chlamydia abortus (strain DSM 27085 / S26/3) (Chlamydophila abortus)).